Consider the following 218-residue polypeptide: MDPFEGRMTFLQLLGKLNASQFSQIKPAQFAIKHLDLEEDLYSCIWEELESGSFNTRVNIMYFVDTLCEMCLKNGLTGGYLNMISRDICKLVQNVAPIGAAGAANAPEVRKVLQSLHEKKVIDDNQYKDAMATVEAHEQASKSGDTSTSGAISKNDILKRIEEDRERHKRMRENIWAISEPELEAEIAWNTTQGITESDLESLKDEYEKFNECLHATS.

A CID domain is found at 2 to 138 (DPFEGRMTFL…DAMATVEAHE (137 aa)). A disordered region spans residues 137–157 (HEQASKSGDTSTSGAISKNDI). The segment covering 141 to 152 (SKSGDTSTSGAI) has biased composition (polar residues).

This sequence belongs to the CTK3 family. As to quaternary structure, CTDK-I consists of three subunits, ctk1/lsk1, ctk2/lsc1 and ctk3 (also called alpha, beta and gamma).

Its subcellular location is the cytoplasm. It localises to the nucleus. Its function is as follows. Subunit of the CTDK-I complex, which hyperphosphorylates the C-terminal heptapeptide repeat domain (CTD) of the largest RNA polymerase II subunit. As part of the CTDK-I complex, involved in RNA polymerase II transcriptional elongation and pre-mRNA 3'-end processing. Together with ctk2, required for ctk1/lsk1 CTD kinase activation. This Schizosaccharomyces pombe (strain 972 / ATCC 24843) (Fission yeast) protein is CTD kinase subunit gamma.